Consider the following 211-residue polypeptide: MRVRKRKGAEEHLENHPEYVIMNPEDIKGHWKEVFGNDHPIHIEVGSGKGGFITGKALQNPEINYIGIDIQLSVLSYALDKVLESNAPNVKLLRVDGSSLTNYFENGEIDLLYLNFSDPWPKTKHEKRRLTYKDFLETYKQILPEHGEIHFKTDNRGLFEYSLASFSQFGMTLKQVWLDLHASDFEGNVMTEYEEKFSKKGQVIYRVEAFF.

S-adenosyl-L-methionine-binding residues include Glu44, Asp69, Asp96, and Asp118. Residue Asp118 is part of the active site. Lys122 provides a ligand contact to substrate. Residues 124–129 (KHEKRR) form an interaction with RNA region. Residues Asp154 and 191–194 (TEYE) each bind substrate.

Belongs to the class I-like SAM-binding methyltransferase superfamily. TrmB family.

It catalyses the reaction guanosine(46) in tRNA + S-adenosyl-L-methionine = N(7)-methylguanosine(46) in tRNA + S-adenosyl-L-homocysteine. The protein operates within tRNA modification; N(7)-methylguanine-tRNA biosynthesis. Its function is as follows. Catalyzes the formation of N(7)-methylguanine at position 46 (m7G46) in tRNA. This Streptococcus uberis (strain ATCC BAA-854 / 0140J) protein is tRNA (guanine-N(7)-)-methyltransferase.